The sequence spans 277 residues: NH(3)-dependent NAD(+) synthetase (277 aa).

47 to 54 (GISGGQDS) is an ATP binding site. Aspartate 53 lines the Mg(2+) pocket. Arginine 141 provides a ligand contact to deamido-NAD(+). Threonine 161 serves as a coordination point for ATP. Glutamate 166 lines the Mg(2+) pocket. Lysine 174 and aspartate 181 together coordinate deamido-NAD(+). The ATP site is built by lysine 190 and threonine 212. 261–262 (HK) contacts deamido-NAD(+).

It belongs to the NAD synthetase family. As to quaternary structure, homodimer.

It carries out the reaction deamido-NAD(+) + NH4(+) + ATP = AMP + diphosphate + NAD(+) + H(+). It participates in cofactor biosynthesis; NAD(+) biosynthesis; NAD(+) from deamido-NAD(+) (ammonia route): step 1/1. In terms of biological role, catalyzes the ATP-dependent amidation of deamido-NAD to form NAD. Uses ammonia as a nitrogen source. This Lactobacillus johnsonii (strain CNCM I-12250 / La1 / NCC 533) protein is NH(3)-dependent NAD(+) synthetase.